The chain runs to 279 residues: Thymidylate synthase (279 aa).

DUMP is bound at residue arginine 133–arginine 134. Cysteine 154 serves as the catalytic Nucleophile. DUMP contacts are provided by residues arginine 178 to aspartate 181, asparagine 189, and histidine 219 to tyrosine 221. Aspartate 181 is a binding site for (6R)-5,10-methylene-5,6,7,8-tetrahydrofolate. Alanine 278 is a binding site for (6R)-5,10-methylene-5,6,7,8-tetrahydrofolate.

Belongs to the thymidylate synthase family. Bacterial-type ThyA subfamily. Homodimer.

It localises to the cytoplasm. The enzyme catalyses dUMP + (6R)-5,10-methylene-5,6,7,8-tetrahydrofolate = 7,8-dihydrofolate + dTMP. It participates in pyrimidine metabolism; dTTP biosynthesis. Its function is as follows. Catalyzes the reductive methylation of 2'-deoxyuridine-5'-monophosphate (dUMP) to 2'-deoxythymidine-5'-monophosphate (dTMP) while utilizing 5,10-methylenetetrahydrofolate (mTHF) as the methyl donor and reductant in the reaction, yielding dihydrofolate (DHF) as a by-product. This enzymatic reaction provides an intracellular de novo source of dTMP, an essential precursor for DNA biosynthesis. The polypeptide is Thymidylate synthase (Streptococcus pneumoniae (strain 70585)).